The primary structure comprises 377 residues: tRNA 2-selenouridine synthase (377 aa).

The Rhodanese domain occupies 18-141 (ITRGVTLIDV…LRQEAMDATD (124 aa)). The active-site S-selanylcysteine intermediate is the cysteine 101.

It belongs to the SelU family. Monomer.

It carries out the reaction 5-methylaminomethyl-2-thiouridine(34) in tRNA + selenophosphate + (2E)-geranyl diphosphate + H2O + H(+) = 5-methylaminomethyl-2-selenouridine(34) in tRNA + (2E)-thiogeraniol + phosphate + diphosphate. The catalysed reaction is 5-methylaminomethyl-2-thiouridine(34) in tRNA + (2E)-geranyl diphosphate = 5-methylaminomethyl-S-(2E)-geranyl-thiouridine(34) in tRNA + diphosphate. It catalyses the reaction 5-methylaminomethyl-S-(2E)-geranyl-thiouridine(34) in tRNA + selenophosphate + H(+) = 5-methylaminomethyl-2-(Se-phospho)selenouridine(34) in tRNA + (2E)-thiogeraniol. The enzyme catalyses 5-methylaminomethyl-2-(Se-phospho)selenouridine(34) in tRNA + H2O = 5-methylaminomethyl-2-selenouridine(34) in tRNA + phosphate. Functionally, involved in the post-transcriptional modification of the uridine at the wobble position (U34) of tRNA(Lys), tRNA(Glu) and tRNA(Gln). Catalyzes the conversion of 2-thiouridine (S2U-RNA) to 2-selenouridine (Se2U-RNA). Acts in a two-step process involving geranylation of 2-thiouridine (S2U) to S-geranyl-2-thiouridine (geS2U) and subsequent selenation of the latter derivative to 2-selenouridine (Se2U) in the tRNA chain. The polypeptide is tRNA 2-selenouridine synthase (Cronobacter sakazakii (strain ATCC BAA-894) (Enterobacter sakazakii)).